We begin with the raw amino-acid sequence, 429 residues long: Glutamyl-tRNA reductase (429 aa).

Substrate-binding positions include 49-52, S107, 112-114, and Q118; these read TCNR and EPQ. C50 acts as the Nucleophile in catalysis. 187-192 is a binding site for NADP(+); the sequence is GAGETI.

This sequence belongs to the glutamyl-tRNA reductase family. Homodimer.

The catalysed reaction is (S)-4-amino-5-oxopentanoate + tRNA(Glu) + NADP(+) = L-glutamyl-tRNA(Glu) + NADPH + H(+). It functions in the pathway porphyrin-containing compound metabolism; protoporphyrin-IX biosynthesis; 5-aminolevulinate from L-glutamyl-tRNA(Glu): step 1/2. In terms of biological role, catalyzes the NADPH-dependent reduction of glutamyl-tRNA(Glu) to glutamate 1-semialdehyde (GSA). The sequence is that of Glutamyl-tRNA reductase from Pseudomonas fluorescens (strain SBW25).